The following is a 146-amino-acid chain: Hemoglobin subunit beta (146 aa).

Valine 1 is subject to N-acetylvaline. Positions 2–146 constitute a Globin domain; that stretch reads HLSADEKNAL…VANALAHKYH (145 aa). Serine 44 bears the Phosphoserine mark. Lysine 59 carries the post-translational modification N6-acetyllysine. Histidine 63 serves as a coordination point for heme b. Position 82 is an N6-acetyllysine (lysine 82). Residue histidine 92 participates in heme b binding. Cysteine 93 bears the S-nitrosocysteine mark. An N6-acetyllysine modification is found at lysine 144.

This sequence belongs to the globin family. Heterotetramer of two alpha chains and two beta chains. As to expression, red blood cells.

In terms of biological role, involved in oxygen transport from the lung to the various peripheral tissues. This is Hemoglobin subunit beta from Sciurus carolinensis (Eastern gray squirrel).